The sequence spans 328 residues: Beta-ribofuranosylphenol 5'-phosphate synthase (328 aa).

The protein belongs to the beta-RFA-P synthase family. In terms of assembly, homodimer. Requires Mg(2+) as cofactor.

It catalyses the reaction 5-phospho-alpha-D-ribose 1-diphosphate + 4-hydroxybenzoate + H(+) = 4-(beta-D-ribofuranosyl)phenol 5'-phosphate + CO2 + diphosphate. The catalysed reaction is 4-aminobenzoate + 5-phospho-alpha-D-ribose 1-diphosphate + H(+) = 4-(beta-D-ribofuranosyl)aminobenzene 5'-phosphate + CO2 + diphosphate. The protein operates within cofactor biosynthesis; 5,6,7,8-tetrahydromethanopterin biosynthesis. Its function is as follows. Catalyzes the condensation of 4-hydroxybenzoate (HB) with 5-phospho-alpha-D-ribose 1-diphosphate (PRPP) to produce beta-ribofuranosylphenol 5'-phosphate (beta-RFH-P). Also catalyzes the condensation of 4-aminobenzoate (pABA) with PRPP to produce beta-ribofuranosylaminobenzene 5'-phosphate (beta-RFA-P). Only 4-hydroxybenzoate is known to be biosynthesized by methanogenic archaea, but 4-aminobenzoate can be used as substrate by growing methanogens when it is present in the growth medium. The protein is Beta-ribofuranosylphenol 5'-phosphate synthase of Methanocaldococcus jannaschii (strain ATCC 43067 / DSM 2661 / JAL-1 / JCM 10045 / NBRC 100440) (Methanococcus jannaschii).